The primary structure comprises 552 residues: CTP synthase (552 aa).

Positions Met-1–Leu-270 are amidoligase domain. Residue Ser-13 coordinates CTP. Ser-13 provides a ligand contact to UTP. ATP is bound by residues Ser-14–Ile-19 and Asp-71. Mg(2+) contacts are provided by Asp-71 and Glu-144. CTP contacts are provided by residues Asp-151 to Glu-153, Lys-191 to Gln-196, and Lys-227. UTP-binding positions include Lys-191–Gln-196 and Lys-227. In terms of domain architecture, Glutamine amidotransferase type-1 spans Thr-295 to Ala-547. Gly-356 is a binding site for L-glutamine. Cys-383 functions as the Nucleophile; for glutamine hydrolysis in the catalytic mechanism. L-glutamine-binding positions include Leu-384–Gln-387, Glu-407, and Arg-473. Residues His-520 and Glu-522 contribute to the active site.

The protein belongs to the CTP synthase family. Homotetramer.

The catalysed reaction is UTP + L-glutamine + ATP + H2O = CTP + L-glutamate + ADP + phosphate + 2 H(+). It carries out the reaction L-glutamine + H2O = L-glutamate + NH4(+). It catalyses the reaction UTP + NH4(+) + ATP = CTP + ADP + phosphate + 2 H(+). Its pathway is pyrimidine metabolism; CTP biosynthesis via de novo pathway; CTP from UDP: step 2/2. Its activity is regulated as follows. Allosterically activated by GTP, when glutamine is the substrate; GTP has no effect on the reaction when ammonia is the substrate. The allosteric effector GTP functions by stabilizing the protein conformation that binds the tetrahedral intermediate(s) formed during glutamine hydrolysis. Inhibited by the product CTP, via allosteric rather than competitive inhibition. Its function is as follows. Catalyzes the ATP-dependent amination of UTP to CTP with either L-glutamine or ammonia as the source of nitrogen. Regulates intracellular CTP levels through interactions with the four ribonucleotide triphosphates. The chain is CTP synthase from Burkholderia ambifaria (strain ATCC BAA-244 / DSM 16087 / CCUG 44356 / LMG 19182 / AMMD) (Burkholderia cepacia (strain AMMD)).